A 233-amino-acid polypeptide reads, in one-letter code: Small ribosomal subunit protein uS3 (233 aa).

The KH type-2 domain maps to 39–107 (VRQYLTKELA…PAQINIAEVR (69 aa)).

Belongs to the universal ribosomal protein uS3 family. As to quaternary structure, part of the 30S ribosomal subunit. Forms a tight complex with proteins S10 and S14.

Functionally, binds the lower part of the 30S subunit head. Binds mRNA in the 70S ribosome, positioning it for translation. This is Small ribosomal subunit protein uS3 from Citrobacter koseri (strain ATCC BAA-895 / CDC 4225-83 / SGSC4696).